The primary structure comprises 465 residues: UDP-N-acetylmuramate--L-alanine ligase (465 aa).

112-118 (GTHGKTT) lines the ATP pocket.

This sequence belongs to the MurCDEF family.

The protein localises to the cytoplasm. The enzyme catalyses UDP-N-acetyl-alpha-D-muramate + L-alanine + ATP = UDP-N-acetyl-alpha-D-muramoyl-L-alanine + ADP + phosphate + H(+). It functions in the pathway cell wall biogenesis; peptidoglycan biosynthesis. In terms of biological role, cell wall formation. In Burkholderia vietnamiensis (strain G4 / LMG 22486) (Burkholderia cepacia (strain R1808)), this protein is UDP-N-acetylmuramate--L-alanine ligase.